The primary structure comprises 107 residues: Putative double-stranded DNA mimic protein HSM_1473 (107 aa).

This sequence belongs to the putative dsDNA mimic protein family.

In terms of biological role, may act as a double-stranded DNA (dsDNA) mimic. Probably regulates the activity of a dsDNA-binding protein. The chain is Putative double-stranded DNA mimic protein HSM_1473 from Histophilus somni (strain 2336) (Haemophilus somnus).